A 352-amino-acid polypeptide reads, in one-letter code: Elongation factor Tu, mitochondrial (352 aa).

Positions 45–241 (RPHVNVGTIG…AIDTHIPLPH (197 aa)) constitute a tr-type G domain. The tract at residues 54 to 61 (GHVDHGKT) is G1. 5 residues coordinate GTP: Asp-57, Gly-59, Lys-60, Thr-61, and Thr-62. Thr-61 provides a ligand contact to Mg(2+). The segment at 95–99 (GITIN) is G2. Positions 116-119 (DCPG) are G3. Residues Asn-171, Asp-174, Ser-209, Ala-210, and Leu-211 each coordinate GTP. A G4 region spans residues 171–174 (NKAD). The G5 stretch occupies residues 209–211 (SAL).

The protein localises to the mitochondrion. The catalysed reaction is GTP + H2O = GDP + phosphate + H(+). GTP hydrolase that promotes the GTP-dependent binding of aminoacyl-tRNA to the A-site of ribosomes during protein biosynthesis. The chain is Elongation factor Tu, mitochondrial from Gallus gallus (Chicken).